Reading from the N-terminus, the 78-residue chain is MAERPLDVIHRSLDKDVLVILKKGFEFRGKLIGYDIHLNIVLAGAEMIQDGEVVKKYGKIVIRGDNVLAISPVDVGVE.

The region spanning 4–76 is the Sm domain; that stretch reads RPLDVIHRSL…VLAISPVDVG (73 aa).

The protein belongs to the snRNP Sm proteins family.

This Thermococcus onnurineus (strain NA1) protein is Putative snRNP Sm-like protein.